A 42-amino-acid polypeptide reads, in one-letter code: Photosystem I reaction center subunit IX (42 aa).

A helical transmembrane segment spans residues 7–27; sequence YLSVAPVLSTLWFGALAGLLI.

It belongs to the PsaJ family.

It is found in the plastid. The protein localises to the chloroplast thylakoid membrane. May help in the organization of the PsaE and PsaF subunits. In Platanus occidentalis (Sycamore), this protein is Photosystem I reaction center subunit IX.